The primary structure comprises 1342 residues: DNA-directed RNA polymerase subunit beta (1342 aa).

The protein belongs to the RNA polymerase beta chain family. As to quaternary structure, the RNAP catalytic core consists of 2 alpha, 1 beta, 1 beta' and 1 omega subunit. When a sigma factor is associated with the core the holoenzyme is formed, which can initiate transcription.

It catalyses the reaction RNA(n) + a ribonucleoside 5'-triphosphate = RNA(n+1) + diphosphate. Functionally, DNA-dependent RNA polymerase catalyzes the transcription of DNA into RNA using the four ribonucleoside triphosphates as substrates. This chain is DNA-directed RNA polymerase subunit beta, found in Vibrio parahaemolyticus serotype O3:K6 (strain RIMD 2210633).